The primary structure comprises 431 residues: Gamma-glutamyl phosphate reductase (431 aa).

The protein belongs to the gamma-glutamyl phosphate reductase family.

The protein localises to the cytoplasm. It carries out the reaction L-glutamate 5-semialdehyde + phosphate + NADP(+) = L-glutamyl 5-phosphate + NADPH + H(+). Its pathway is amino-acid biosynthesis; L-proline biosynthesis; L-glutamate 5-semialdehyde from L-glutamate: step 2/2. In terms of biological role, catalyzes the NADPH-dependent reduction of L-glutamate 5-phosphate into L-glutamate 5-semialdehyde and phosphate. The product spontaneously undergoes cyclization to form 1-pyrroline-5-carboxylate. The protein is Gamma-glutamyl phosphate reductase of Trichodesmium erythraeum (strain IMS101).